A 121-amino-acid chain; its full sequence is Large ribosomal subunit protein uL14 (121 aa).

The protein belongs to the universal ribosomal protein uL14 family. Part of the 50S ribosomal subunit. Forms a cluster with proteins L3 and L19. In the 70S ribosome, L14 and L19 interact and together make contacts with the 16S rRNA in bridges B5 and B8.

In terms of biological role, binds to 23S rRNA. Forms part of two intersubunit bridges in the 70S ribosome. This chain is Large ribosomal subunit protein uL14, found in Akkermansia muciniphila (strain ATCC BAA-835 / DSM 22959 / JCM 33894 / BCRC 81048 / CCUG 64013 / CIP 107961 / Muc).